The following is a 324-amino-acid chain: Ribosomal RNA small subunit methyltransferase H (324 aa).

Residues 47–49 (GGH), Asp67, Leu96, Asp115, and Gln122 each bind S-adenosyl-L-methionine.

This sequence belongs to the methyltransferase superfamily. RsmH family.

It localises to the cytoplasm. The enzyme catalyses cytidine(1402) in 16S rRNA + S-adenosyl-L-methionine = N(4)-methylcytidine(1402) in 16S rRNA + S-adenosyl-L-homocysteine + H(+). Its function is as follows. Specifically methylates the N4 position of cytidine in position 1402 (C1402) of 16S rRNA. The protein is Ribosomal RNA small subunit methyltransferase H of Halorhodospira halophila (strain DSM 244 / SL1) (Ectothiorhodospira halophila (strain DSM 244 / SL1)).